A 208-amino-acid polypeptide reads, in one-letter code: Heavy metal-associated isoprenylated plant protein 42 (208 aa).

Residues 6-70 form the HMA domain; the sequence is FPICILKMNL…AVAKLGQSPQ (65 aa). The disordered stretch occupies residues 93-116; the sequence is ATNKTQDKPSPPAPPVTATTPVET. At C205 the chain carries Cysteine methyl ester. The S-farnesyl cysteine moiety is linked to residue C205. Positions 206–208 are cleaved as a propeptide — removed in mature form; the sequence is SIM.

The protein belongs to the HIPP family.

In terms of biological role, probable heavy-metal-binding protein. In Arabidopsis thaliana (Mouse-ear cress), this protein is Heavy metal-associated isoprenylated plant protein 42.